Reading from the N-terminus, the 92-residue chain is Small ribosomal subunit protein uS19c (92 aa).

Belongs to the universal ribosomal protein uS19 family.

It is found in the plastid. The protein localises to the chloroplast. Its function is as follows. Protein S19 forms a complex with S13 that binds strongly to the 16S ribosomal RNA. In Nymphaea alba (White water-lily), this protein is Small ribosomal subunit protein uS19c.